The following is a 292-amino-acid chain: 33 kDa chaperonin (292 aa).

2 cysteine pairs are disulfide-bonded: cysteine 230–cysteine 232 and cysteine 263–cysteine 266.

It belongs to the HSP33 family. Under oxidizing conditions two disulfide bonds are formed involving the reactive cysteines. Under reducing conditions zinc is bound to the reactive cysteines and the protein is inactive.

Its subcellular location is the cytoplasm. Redox regulated molecular chaperone. Protects both thermally unfolding and oxidatively damaged proteins from irreversible aggregation. Plays an important role in the bacterial defense system toward oxidative stress. This chain is 33 kDa chaperonin, found in Serratia proteamaculans (strain 568).